We begin with the raw amino-acid sequence, 339 residues long: Phenylalanine--tRNA ligase alpha subunit (339 aa).

Glutamate 247 is a Mg(2+) binding site.

It belongs to the class-II aminoacyl-tRNA synthetase family. Phe-tRNA synthetase alpha subunit type 1 subfamily. Tetramer of two alpha and two beta subunits. Mg(2+) is required as a cofactor.

The protein localises to the cytoplasm. It catalyses the reaction tRNA(Phe) + L-phenylalanine + ATP = L-phenylalanyl-tRNA(Phe) + AMP + diphosphate + H(+). The sequence is that of Phenylalanine--tRNA ligase alpha subunit (pheS) from Deinococcus radiodurans (strain ATCC 13939 / DSM 20539 / JCM 16871 / CCUG 27074 / LMG 4051 / NBRC 15346 / NCIMB 9279 / VKM B-1422 / R1).